Consider the following 293-residue polypeptide: Elongation factor Ts (293 aa).

The interval 80–83 is involved in Mg(2+) ion dislocation from EF-Tu; that stretch reads TDFV.

Belongs to the EF-Ts family.

The protein resides in the cytoplasm. Functionally, associates with the EF-Tu.GDP complex and induces the exchange of GDP to GTP. It remains bound to the aminoacyl-tRNA.EF-Tu.GTP complex up to the GTP hydrolysis stage on the ribosome. The chain is Elongation factor Ts from Burkholderia multivorans (strain ATCC 17616 / 249).